The following is a 217-amino-acid chain: Ribonuclease HII (217 aa).

An RNase H type-2 domain is found at 27–216 (SRVAGVDEAG…VKESIQEGVC (190 aa)). Positions 33, 34, and 126 each coordinate a divalent metal cation.

It belongs to the RNase HII family. It depends on Mn(2+) as a cofactor. Requires Mg(2+) as cofactor.

Its subcellular location is the cytoplasm. The catalysed reaction is Endonucleolytic cleavage to 5'-phosphomonoester.. In terms of biological role, endonuclease that specifically degrades the RNA of RNA-DNA hybrids. The chain is Ribonuclease HII from Chlamydia trachomatis serovar A (strain ATCC VR-571B / DSM 19440 / HAR-13).